A 423-amino-acid chain; its full sequence is UDP-N-acetylmuramoylalanine--D-glutamate ligase (423 aa).

An ATP-binding site is contributed by 112-118 (GSVGKST).

It belongs to the MurCDEF family.

It localises to the cytoplasm. It carries out the reaction UDP-N-acetyl-alpha-D-muramoyl-L-alanine + D-glutamate + ATP = UDP-N-acetyl-alpha-D-muramoyl-L-alanyl-D-glutamate + ADP + phosphate + H(+). It functions in the pathway cell wall biogenesis; peptidoglycan biosynthesis. Its function is as follows. Cell wall formation. Catalyzes the addition of glutamate to the nucleotide precursor UDP-N-acetylmuramoyl-L-alanine (UMA). This chain is UDP-N-acetylmuramoylalanine--D-glutamate ligase, found in Thermosipho africanus (strain TCF52B).